A 136-amino-acid polypeptide reads, in one-letter code: Small ribosomal subunit protein uS8 (136 aa).

The protein belongs to the universal ribosomal protein uS8 family. In terms of assembly, part of the 30S ribosomal subunit. Contacts proteins S5 and S12.

Its function is as follows. One of the primary rRNA binding proteins, it binds directly to 16S rRNA central domain where it helps coordinate assembly of the platform of the 30S subunit. This is Small ribosomal subunit protein uS8 from Sulfurihydrogenibium sp. (strain YO3AOP1).